The following is a 107-amino-acid chain: uncharacterized protein (107 aa).

The Cytoplasmic segment spans residues 1-4; the sequence is MSLV. Residues 5 to 25 traverse the membrane as a helical segment; the sequence is IDIADTIVSLTALIGLIITLI. The Extracellular portion of the chain corresponds to 26-107; that stretch reads KFHSQNKEDA…ELCRSSDRSK (82 aa).

It localises to the host membrane. This is an uncharacterized protein from Acidianus sp. F28 (AFV-2).